The sequence spans 460 residues: A-type ATP synthase subunit B (460 aa).

It belongs to the ATPase alpha/beta chains family. In terms of assembly, has multiple subunits, A(3), B(3), C, D, E, F, G, I and K(x); there may be a few other subunits as well.

It is found in the cell membrane. Functionally, component of the A-type ATP synthase that produces ATP from ADP in the presence of a proton gradient across the membrane. The B chain is a regulatory subunit. This is A-type ATP synthase subunit B from Methanosarcina mazei (strain ATCC BAA-159 / DSM 3647 / Goe1 / Go1 / JCM 11833 / OCM 88) (Methanosarcina frisia).